Here is a 78-residue protein sequence, read N- to C-terminus: Large ribosomal subunit protein bL28 (78 aa).

Belongs to the bacterial ribosomal protein bL28 family.

The sequence is that of Large ribosomal subunit protein bL28 from Aromatoleum aromaticum (strain DSM 19018 / LMG 30748 / EbN1) (Azoarcus sp. (strain EbN1)).